A 477-amino-acid polypeptide reads, in one-letter code: Transcription factor Sox-9-A (477 aa).

2 disordered regions span residues 1–66 (MNLL…ETED) and 157–274 (EAER…FRDV). The segment covering 27 to 42 (SDDSAGSPCPSGSGSD) has biased composition (low complexity). Basic and acidic residues-rich tracts occupy residues 56–66 (GDQELKKETED) and 157–174 (EAER…DYKY). K61 participates in a covalent cross-link: Glycyl lysine isopeptide (Lys-Gly) (interchain with G-Cter in SUMO). The segment at 63-103 (ETEDEKFPVCIREAVSQVLKGYDWTLVPMPVRVNGSSKNKP) is dimerization (DIM). A PQA region spans residues 63-103 (ETEDEKFPVCIREAVSQVLKGYDWTLVPMPVRVNGSSKNKP). The HMG box DNA-binding region spans 105–173 (VKRPMNAFMV…QHKKDHPDYK (69 aa)). Positions 211–222 (SPHSSSSMSEVH) are enriched in low complexity. The interval 224-308 (PGEHSGQSQG…LPPNGHPGVG (85 aa)) is transactivation domain (TAM). Short sequence motifs (9aaTAD) lie at residues 276 to 285 (IGELSSEVIS) and 291 to 299 (DVNEFDQYL). The interval 301–384 (PNGHPGVGST…SDQQQQHSPQ (84 aa)) is disordered. 2 stretches are compositionally biased toward polar residues: residues 308-328 (GSTQ…SATT) and 346-361 (HSLS…SQQR). A transactivation domain (TAC) region spans residues 361–477 (RTHIKTEQLS…QPVYTQLTRP (117 aa)). A Glycyl lysine isopeptide (Lys-Gly) (interchain with G-Cter in SUMO) cross-link involves residue K365. Residues 370–384 (SPSHYSDQQQQHSPQ) show a composition bias toward low complexity. The 9aaTAD 3 motif lies at 428–436 (SGLYSTFSY). Positions 446–477 (TPIADTTGVPSIPQTHSPQHWEQPVYTQLTRP) are disordered. Over residues 453–477 (GVPSIPQTHSPQHWEQPVYTQLTRP) the composition is skewed to polar residues.

Interacts with the sumoylation factors ube2i/ubc9 and sumo1. In terms of processing, sumoylated. Lys-365 is the major site of sumoylation, although sumoylation at Lys-61 also occurs. Sumoylation plays a key role in regulating formation of the neural crest and otic placode. As to expression, from mid-gastrula (stage 10.5-11), expressed in a ring around the blastopore, with expression decreasing toward the dorsal side. At stage 12, expression around the blastopore decreases and begins to increase lateral to the neural plate in the presumptive neural crest, where expression dramatically increases around stage 14. Also expressed in the otic placode as early as stage 13/14. By the tailbud stage expression is restricted to the otic cup and then throughout the otic vesicle, with more intense staining at the dorsal-most region, the prospective region of the semicircular canals and endolymphatic duct. At the early tailbud stage (stage 23), expressed in migrating cranial neural crest cells and in the trunk neural crest. Also expressed in the genital ridges, developing eye, nasal placode and prospective pineal gland. Around stage 25, expression is down-regulated in the trunk neural crest but persists in the migrating cranial crest cells as they populate the pharyngeal arches, otic placode, developing eye, genital ridges and notochord. By stage 31, expression remains strong in the pharyngeal arches. Also expressed in the pancreas; first expressed at stage 25 in the pancreatic anlagen, dorsally in diverticulum. As development proceeds, expression continues in pancreatic tissue, being restricted to ventral and dorsal pancreatic buds.

The protein resides in the nucleus. It localises to the cytoplasm. Functionally, transcription factor that plays a key role in chondrocytes differentiation and skeletal development. Specifically binds the 5'-ACAAAG-3' DNA motif present in enhancers and super-enhancers and promotes expression of genes important for chondrogenesis, including COL2A1. Plays a central role in successive steps of chondrocyte differentiation. Absolutely required for precartilaginous condensation, the first step in chondrogenesis during which skeletal progenitors differentiate into prechondrocytes. Together with SOX5 and SOX6, required for overt chondrogenesis when condensed prechondrocytes differentiate into early stage chondrocytes, the second step in chondrogenesis. Later, required to direct hypertrophic maturation and block osteoblast differentiation of growth plate chondrocytes: maintains chondrocyte columnar proliferation, delays prehypertrophy and then prevents osteoblastic differentiation of chondrocytes. Also required for chondrocyte hypertrophy, both indirectly, by keeping the lineage fate of chondrocytes, and directly, by remaining present in upper hypertrophic cells. Low lipid levels are the main nutritional determinant for chondrogenic commitment of skeletal progenitor cells: when lipids levels are low, FOXO transcription factors promote expression of SOX9, which induces chondrogenic commitment and suppresses fatty acid oxidation. In addition to cartilage development, also acts as a regulator of proliferation and differentiation in epithelial stem/progenitor cells. Involved in development of the cranial neural crest, which is fated to form skeletal elements. Also required for otic placode specification during inner ear development. The protein is Transcription factor Sox-9-A (sox9-a) of Xenopus laevis (African clawed frog).